Consider the following 363-residue polypeptide: Protein-arginine kinase (363 aa).

One can recognise a Phosphagen kinase C-terminal domain in the interval Ile24 to Ala255. Residues Ser27–Arg31, His92, Arg126, Arg177–Met181, and Arg208–Glu213 contribute to the ATP site. The RDXXRA motif of the pArg binding pocket involved in allosteric regulation motif lies at Arg338–Ala343.

It belongs to the ATP:guanido phosphotransferase family. In terms of assembly, homodimer. Dimerization is important for full catalytic activity.

The catalysed reaction is L-arginyl-[protein] + ATP = N(omega)-phospho-L-arginyl-[protein] + ADP + H(+). Appears to be allosterically activated by the binding of pArg-containing polypeptides to the pArg-binding pocket localized in the C-terminal domain of McsB. In terms of biological role, catalyzes the specific phosphorylation of arginine residues in a large number of proteins. Is part of the bacterial stress response system, where it is involved in regulating the global heat shock repressor CtsR; phosphorylates arginine residues in the winged helix-turn-helix domain of CtsR, thereby preventing its binding to DNA and consequently inducing the expression of repressed genes. Protein arginine phosphorylation has a physiologically important role and is involved in the regulation of many critical cellular processes, such as protein homeostasis, motility, competence, and stringent and stress responses, by regulating gene expression and protein activity. Acts exclusively on Arg residues, since it cannot phosphorylate Tyr, Ser, Thr, His, Asp and Lys. Has no free arginine kinase activity. The protein is Protein-arginine kinase of Geobacillus stearothermophilus (Bacillus stearothermophilus).